The chain runs to 253 residues: Serine/threonine-protein phosphatase 3 (253 aa).

The cofactor is Mn(2+). Post-translationally, phosphorylated by YegI.

The catalysed reaction is O-phospho-L-seryl-[protein] + H2O = L-seryl-[protein] + phosphate. It catalyses the reaction O-phospho-L-threonyl-[protein] + H2O = L-threonyl-[protein] + phosphate. Activity dramatically decreases in the presence of the general protein phosphatase inhibitor sodium phosphate. Slightly inhibited by sodium fluoride. Activity decreases in the presence of the metal chelator EDTA. Functionally, PP2C-like phosphatase that can dephosphorylate YegI. In vitro, can hydrolyze p-nitrophenyl phosphate (pNPP) to p-nitrophenol. The sequence is that of Serine/threonine-protein phosphatase 3 from Escherichia coli (strain K12).